The primary structure comprises 264 residues: DNA repair protein RecO (264 aa).

This sequence belongs to the RecO family.

Functionally, involved in DNA repair and RecF pathway recombination. The polypeptide is DNA repair protein RecO (Prosthecochloris aestuarii (strain DSM 271 / SK 413)).